A 139-amino-acid chain; its full sequence is Actin-depolymerizing factor 1 (139 aa).

The ADF-H domain occupies 5-139; it reads ASGMAVHDDC…DLDVFRSRAN (135 aa). Residue serine 6 is modified to Phosphoserine; by CPK3.

It belongs to the actin-binding proteins ADF family. As to quaternary structure, interacts with the 14-3-3-like protein GRF6/AFT1. Phosphorylation at Ser-6 by CPK3/CDPK6 inhibits actin-depolimerizing activity. As to expression, expressed in vascular tissues of all organs.

It is found in the cytoplasm. It localises to the cytoskeleton. Its function is as follows. Actin-depolymerizing protein. Stimulates F-actin depolymerization. Involved in plant development, cell organ expansion and flowering by controlling breakdown of thick actin cables. Severs actin filaments or bundles and promotes actin cytoskeleton disassembly. Binds monomeric actin (G-actin) with a marked preference for the ADP-loaded form and inhibits the rate of nucleotide exchange on G-actin. In Arabidopsis thaliana (Mouse-ear cress), this protein is Actin-depolymerizing factor 1 (ADF1).